We begin with the raw amino-acid sequence, 684 residues long: MSLWPPFRCRWKLAPRYSRRASPQQPQQDFEALLAECLRNGCLFEDTSFPATLSSIGSGSLLQKLPPRLQWKRPPELHSNPQFYFAKAKRLDLCQGIVGDCWFLAALQALALHQDILSRVVPLNQSFTEKYAGIFRFWFWHYGNWVPVVIDDRLPVNEAGQLVFVSSTYKNLFWGALLEKAYAKLSGSYEDLQSGQVSEALVDFTGGVTMTINLAEAHGNLWDILIEATYNRTLIGCQTHSGEKILENGLVEGHAYTLTGIRKVTCKHRPEYLVKLRNPWGKVEWKGDWSDSSSKWELLSPKEKILLLRKDNDGEFWMTLQDFKTHFVLLVICKLTPGLLSQEAAQKWTYTMREGRWEKRSTAGGQRQLLQDTFWKNPQFLLSVWRPEEGRRSLRPCSVLVSLLQKPRHRCRKRKPLLAIGFYLYRMNKYHDDQRRLPPEFFQRNTPLSQPDRFLKEKEVSQELCLEPGTYLIVPCILEAHQKSEFVLRVFSRKHIFYEIGSNSGVVFSKEIEDQNERQDEFFTKFFEKHPEINAVQLQNLLNQMTWSSLGSRQPFFSLEACQGILALLDLNASGTMSIQEFRDLWKQLKLSQKVFHKQDRGSGYLNWEQLHAAMREAGIMLSDDVCQLMLIRYGGPRLQMDFVSFIHLMLRVENMEDVFQNLTQDGKGIYLQKPEWMMMALYS.

Residues 43–336 (LFEDTSFPAT…FVLLVICKLT (294 aa)) form the Calpain catalytic domain. Residues Cys-101, His-254, and Asn-278 contribute to the active site. Positions 337 to 503 (PGLLSQEAAQ…KHIFYEIGSN (167 aa)) are domain III. A linker region spans residues 504-517 (SGVVFSKEIEDQNE). The tract at residues 518-683 (RQDEFFTKFF…KPEWMMMALY (166 aa)) is domain IV. 3 EF-hand domains span residues 557 to 592 (FSLE…LKLS), 586 to 621 (WKQL…AGIM), and 651 to 684 (LRVE…ALYS). Ca(2+)-binding residues include Asp-570, Asn-572, Ser-574, Thr-576, and Glu-581.

Belongs to the peptidase C2 family. In terms of tissue distribution, not expressed in tissues tested.

Functionally, calcium-regulated non-lysosomal thiol-protease. This chain is Calpain-14 (CAPN14), found in Homo sapiens (Human).